Here is a 453-residue protein sequence, read N- to C-terminus: Chromosomal replication initiator protein DnaA (453 aa).

The segment at 1 to 71 (MSEKEIWEKV…QAILFDVVGY (71 aa)) is domain I, interacts with DnaA modulators. The interval 71-114 (YEVKPHFITTEELANYSNNETATPKETTKPSTETTEDNHVLGRE) is domain II. The segment at 115–331 (QFNAHNTFDT…GALTRLLAYS (217 aa)) is domain III, AAA+ region. ATP is bound by residues glycine 159, glycine 161, lysine 162, and threonine 163. The interval 332 to 453 (QLLGKPITTE…ENLEKEIRNV (122 aa)) is domain IV, binds dsDNA.

Belongs to the DnaA family. In terms of assembly, oligomerizes as a right-handed, spiral filament on DNA at oriC.

Its subcellular location is the cytoplasm. In terms of biological role, plays an essential role in the initiation and regulation of chromosomal replication. ATP-DnaA binds to the origin of replication (oriC) to initiate formation of the DNA replication initiation complex once per cell cycle. Binds the DnaA box (a 9 base pair repeat at the origin) and separates the double-stranded (ds)DNA. Forms a right-handed helical filament on oriC DNA; dsDNA binds to the exterior of the filament while single-stranded (ss)DNA is stabiized in the filament's interior. The ATP-DnaA-oriC complex binds and stabilizes one strand of the AT-rich DNA unwinding element (DUE), permitting loading of DNA polymerase. After initiation quickly degrades to an ADP-DnaA complex that is not apt for DNA replication. Binds acidic phospholipids. The protein is Chromosomal replication initiator protein DnaA of Staphylococcus aureus (strain bovine RF122 / ET3-1).